Consider the following 1507-residue polypeptide: Paired amphipathic helix protein sin-3 (1507 aa).

Disordered regions lie at residues Met-1–Ala-26, Pro-228–Val-286, Glu-397–Glu-450, Val-543–Lys-569, and Ile-1349–Leu-1434. Polar residues predominate over residues Asp-16–Ala-26. Residues Arg-270–Lys-279 show a composition bias toward basic residues. The 71-residue stretch at Gly-282–Gly-352 folds into the PAH domain. Over residues Asp-427–Gly-438 the composition is skewed to acidic residues. Composition is skewed to basic and acidic residues over residues Ile-439–Glu-450 and Glu-555–Ser-568. Acidic residues-rich tracts occupy residues Lys-1354 to Asn-1365, Asn-1373 to Asp-1382, and Pro-1389 to Glu-1421.

In terms of assembly, component of the SIN3S complex, which contains at least sin-3, hda-1, athp-1 and mrg-1. Interacts with ztf-11; the interaction is weak. Interacts with cfp-1. As to expression, expressed in all ray structural cells including ray 6, 7, 8 and 9 of the male tail. Also expressed in the inner labial neurons, socket cells, the cephalic neurons in the head and the ventral nerve cord.

The protein resides in the nucleus. Functionally, probable transcriptional repressor required for the deposition of dimethylated 'Lys-9' of histone H3 (H3K9me2) on asynapsed chromosome pairs (both autosomes and sex chromosomes) during meiosis, but this does not seem to solely affect the transcriptional status. Plays a role in ray fusion and patterning in the male tail, and this may be through activity of the histone deacetylase complex (HDAC). This chain is Paired amphipathic helix protein sin-3, found in Caenorhabditis elegans.